We begin with the raw amino-acid sequence, 208 residues long: Putative 3-methyladenine DNA glycosylase (208 aa).

It belongs to the DNA glycosylase MPG family.

The protein is Putative 3-methyladenine DNA glycosylase of Lactobacillus delbrueckii subsp. bulgaricus (strain ATCC 11842 / DSM 20081 / BCRC 10696 / JCM 1002 / NBRC 13953 / NCIMB 11778 / NCTC 12712 / WDCM 00102 / Lb 14).